We begin with the raw amino-acid sequence, 245 residues long: DNA repair protein RecO (245 aa).

This sequence belongs to the RecO family.

In terms of biological role, involved in DNA repair and RecF pathway recombination. In Porphyromonas gingivalis (strain ATCC 33277 / DSM 20709 / CIP 103683 / JCM 12257 / NCTC 11834 / 2561), this protein is DNA repair protein RecO.